We begin with the raw amino-acid sequence, 794 residues long: K(+)-insensitive pyrophosphate-energized proton pump (794 aa).

A run of 5 helical transmembrane segments spans residues 20 to 40 (ALVA…GVLV), 74 to 94 (TLGV…ADDW), 102 to 122 (IFFL…MWLA), 163 to 183 (GVVG…VVLV), and 194 to 214 (GFGL…GIFT). A substrate-binding site is contributed by Lys215. Residues Asp218, Asp222, Asn245, and Asp248 each coordinate Mg(2+). 6 helical membrane passes run 264–284 (YAVT…DFGL), 285–305 (AFPL…IFAV), 321–341 (GFFI…FVYL), 365–385 (ILAL…QQLT), 422–442 (AVYT…LGGT), and 446–466 (LALF…GVIV). Asp476 provides a ligand contact to Mg(2+). 3 helical membrane-spanning segments follow: residues 508–528 (AITK…LFGS), 564–584 (VGLI…INAV), and 641–661 (IFIG…GAIG). Residues Asp678, Asp704, and Asp708 each coordinate Ca(2+). Lys711 serves as a coordination point for substrate. The next 2 helical transmembrane spans lie at 717 to 737 (AINP…PAVI) and 747 to 767 (VVVR…AVYV).

The protein belongs to the H(+)-translocating pyrophosphatase (TC 3.A.10) family. K(+)-insensitive subfamily. As to quaternary structure, homodimer. Mg(2+) serves as cofactor.

It localises to the cell membrane. The enzyme catalyses diphosphate + H2O + H(+)(in) = 2 phosphate + 2 H(+)(out). Proton pump that utilizes the energy of pyrophosphate hydrolysis as the driving force for proton movement across the membrane. Generates a proton motive force. The polypeptide is K(+)-insensitive pyrophosphate-energized proton pump (Streptomyces coelicolor (strain ATCC BAA-471 / A3(2) / M145)).